A 445-amino-acid polypeptide reads, in one-letter code: Tubby-like F-box protein 14 (445 aa).

The F-box domain occupies 56-114; the sequence is SSCWANLPPELLRDVIERLEASEAAWPSRKNVVACAAVCRTWRDMCREIVKNPEFCGKI.

Belongs to the TUB family. In terms of tissue distribution, ubiquitous.

The protein is Tubby-like F-box protein 14 (TULP14) of Oryza sativa subsp. japonica (Rice).